A 205-amino-acid polypeptide reads, in one-letter code: Small ribosomal subunit protein uS4 (205 aa).

The disordered stretch occupies residues N18 to S46. An S4 RNA-binding domain is found at R94–N157.

Belongs to the universal ribosomal protein uS4 family. Part of the 30S ribosomal subunit. Contacts protein S5. The interaction surface between S4 and S5 is involved in control of translational fidelity.

One of the primary rRNA binding proteins, it binds directly to 16S rRNA where it nucleates assembly of the body of the 30S subunit. Functionally, with S5 and S12 plays an important role in translational accuracy. This is Small ribosomal subunit protein uS4 from Rhodopseudomonas palustris (strain BisB18).